The chain runs to 877 residues: Probable alpha/beta-glucosidase agdC (877 aa).

The first 14 residues, 1–14, serve as a signal peptide directing secretion; it reads MLGSLLLLAPLAGA. 3 N-linked (GlcNAc...) asparagine glycosylation sites follow: N171, N293, and N373. D422 (nucleophile) is an active-site residue. E425 is a catalytic residue. The disordered stretch occupies residues 432–476; the sequence is DPCTDPERYSSENNLPPAPPPVRSSSPRPLPGFPADFQPSSASRS. A compositionally biased stretch (pro residues) spans 447 to 463; that stretch reads PPAPPPVRSSSPRPLPG. An N-linked (GlcNAc...) asparagine glycan is attached at N508. Catalysis depends on D573, which acts as the Proton donor. N-linked (GlcNAc...) asparagine glycosylation is found at N574, N610, and N744.

This sequence belongs to the glycosyl hydrolase 31 family.

It localises to the secreted. The enzyme catalyses Hydrolysis of terminal, non-reducing (1-&gt;4)-linked alpha-D-glucose residues with release of alpha-D-glucose.. It carries out the reaction Hydrolysis of terminal, non-reducing beta-D-glucosyl residues with release of beta-D-glucose.. In terms of biological role, glucosidase involved in the degradation of cellulosic biomass. Has both alpha- and beta-glucosidase activity. In Aspergillus flavus (strain ATCC 200026 / FGSC A1120 / IAM 13836 / NRRL 3357 / JCM 12722 / SRRC 167), this protein is Probable alpha/beta-glucosidase agdC (agdC).